The chain runs to 125 residues: MIYGIGTDIVSLKRIIRLNKKFGQAFAGRILTPEELLEFPQAGKPVNYLAKRFAAKEAFAKAVGTGIRGAVSFCNIGIGHDALGKPEFFYGPALSEWLEEQGISRVSLSMADEGDTVLAFAVAEK.

Residues Asp-8 and Glu-57 each contribute to the Mg(2+) site.

The protein belongs to the P-Pant transferase superfamily. AcpS family. It depends on Mg(2+) as a cofactor.

The protein resides in the cytoplasm. The enzyme catalyses apo-[ACP] + CoA = holo-[ACP] + adenosine 3',5'-bisphosphate + H(+). Functionally, transfers the 4'-phosphopantetheine moiety from coenzyme A to a Ser of acyl-carrier-protein. This Neisseria gonorrhoeae (strain ATCC 700825 / FA 1090) protein is Holo-[acyl-carrier-protein] synthase.